Reading from the N-terminus, the 434-residue chain is MLRDEDRIFTNIYGLKDKSLRGAMARGHWDGTKQFLEKGRDWIINEVKASGLRGRGGAGFPTGLKWSFMPKESDGRPHYLVVNADESEPGTCKDRDIMRHDPHTLIEGCVIASFAMGAHAAYIYVRGEFIREREALQAAIDECYEYGLLGKNNKLGYDIDIYVHHGAGAYICGEETALLESLEGKKGQPRLKPPFPANMGLYGCPTTVNNVESIAVTPTILRRGAGWYTSFGRPNNHGTKLYSVSGHVNRPCTVEDAMSIPFHELIEKHCGGIRGGWDNLLAVIPGGSSVPCVPGAQMKDAIMDYDGLRELGSGLGTAAVIVMDKSTDIIKAIWRLSAFYKHESCGQCTPCREGTGWMMRVMERMVQGRAQKREIDMLFDVTKQVEGHTICALGDAAAWPIQGLIKHFRPEMEKRIDEYTRNATSHGAVLEAAE.

54–63 provides a ligand contact to NAD(+); the sequence is GRGGAGFPTG. Residue 166–213 coordinates FMN; that stretch reads GAGAYICGEETALLESLEGKKGQPRLKPPFPANMGLYGCPTTVNNVES. [4Fe-4S] cluster contacts are provided by cysteine 345, cysteine 348, cysteine 351, and cysteine 391.

It belongs to the complex I 51 kDa subunit family. FMN serves as cofactor. It depends on [4Fe-4S] cluster as a cofactor.

The enzyme catalyses a quinone + NADH + 5 H(+)(in) = a quinol + NAD(+) + 4 H(+)(out). Functionally, NDH-1 shuttles electrons from NADH, via FMN and iron-sulfur (Fe-S) centers, to quinones in the respiratory chain. The immediate electron acceptor for the enzyme in this species is believed to be ubiquinone. Couples the redox reaction to proton translocation (for every two electrons transferred, four hydrogen ions are translocated across the cytoplasmic membrane), and thus conserves the redox energy in a proton gradient. In Rhizobium meliloti (strain 1021) (Ensifer meliloti), this protein is NADH-quinone oxidoreductase subunit F 1 (nuoF1).